The following is an 87-amino-acid chain: Small ribosomal subunit protein uS19 (87 aa).

Belongs to the universal ribosomal protein uS19 family.

Functionally, protein S19 forms a complex with S13 that binds strongly to the 16S ribosomal RNA. The sequence is that of Small ribosomal subunit protein uS19 (rpsS) from Mycoplasma genitalium (strain ATCC 33530 / DSM 19775 / NCTC 10195 / G37) (Mycoplasmoides genitalium).